The primary structure comprises 1475 residues: Protein STU1 (1475 aa).

Disordered stretches follow at residues 870-913 and 1113-1134; these read REST…EPDL and DGESIEDTSGNTSHGTDENRPA. The segment covering 887–896 has biased composition (basic and acidic residues); it reads DGAHGGDARD.

Belongs to the CLASP family. In terms of assembly, interacts with microtubules.

The protein resides in the cytoplasm. The protein localises to the cytoskeleton. Its subcellular location is the nucleus. It localises to the spindle. Its function is as follows. Microtubule binding protein that promotes the stabilization of dynamic microtubules. Required for mitotic spindle formation. This Eremothecium gossypii (strain ATCC 10895 / CBS 109.51 / FGSC 9923 / NRRL Y-1056) (Yeast) protein is Protein STU1 (STU1).